A 204-amino-acid chain; its full sequence is Guanylate kinase (204 aa).

One can recognise a Guanylate kinase-like domain in the interval 3–181; that stretch reads GTLIIITAPS…ALDDLVAVVR (179 aa). Residue 10-17 participates in ATP binding; that stretch reads APSGAGKT.

Belongs to the guanylate kinase family.

The protein resides in the cytoplasm. It carries out the reaction GMP + ATP = GDP + ADP. Its function is as follows. Essential for recycling GMP and indirectly, cGMP. The chain is Guanylate kinase from Aromatoleum aromaticum (strain DSM 19018 / LMG 30748 / EbN1) (Azoarcus sp. (strain EbN1)).